Reading from the N-terminus, the 348-residue chain is 3-isopropylmalate dehydrogenase (348 aa).

NAD(+) is bound at residue 76-87 (GPKWTDPNNRPE). The substrate site is built by R94, R104, R132, and D217. D217, D241, and D245 together coordinate Mg(2+). 275-287 (GSAPDIAGKNVAN) contacts NAD(+).

The protein belongs to the isocitrate and isopropylmalate dehydrogenases family. LeuB type 1 subfamily. Homodimer. Mg(2+) is required as a cofactor. Mn(2+) serves as cofactor.

The protein resides in the cytoplasm. It carries out the reaction (2R,3S)-3-isopropylmalate + NAD(+) = 4-methyl-2-oxopentanoate + CO2 + NADH. It participates in amino-acid biosynthesis; L-leucine biosynthesis; L-leucine from 3-methyl-2-oxobutanoate: step 3/4. Catalyzes the oxidation of 3-carboxy-2-hydroxy-4-methylpentanoate (3-isopropylmalate) to 3-carboxy-4-methyl-2-oxopentanoate. The product decarboxylates to 4-methyl-2 oxopentanoate. This Staphylococcus aureus (strain NCTC 8325 / PS 47) protein is 3-isopropylmalate dehydrogenase.